The sequence spans 373 residues: Ubiquitin carboxyl-terminal hydrolase 50 (373 aa).

Residues 44–364 (TGLRNLGNTC…TAYLLFYSCQ (321 aa)) form the USP domain. C53 serves as the catalytic Nucleophile. H322 serves as the catalytic Proton acceptor.

It belongs to the peptidase C19 family.

The protein resides in the cytoplasm. It is found in the cytoskeleton. The protein localises to the microtubule organizing center. It localises to the centrosome. Its subcellular location is the nucleus. It carries out the reaction Thiol-dependent hydrolysis of ester, thioester, amide, peptide and isopeptide bonds formed by the C-terminal Gly of ubiquitin (a 76-residue protein attached to proteins as an intracellular targeting signal).. Deubiquitinating enzyme that removes conjugated ubiquitin from specific proteins to regulate different cellular processes. Regulates the inflammasome signaling pathway by deubiquitinating 'Lys-63'-linked polyubiquitination of the PYCARD/ASC adapter protein. Regulates the ubiquitination and stability of the ACE2 protein. Acts as a negative regulator of the G2/M checkpoint pathway, by preventing serine/threonine kinase WEE1 degradation, thereby repressing entry into mitosis following activation of the G2/M DNA damage checkpoint. The sequence is that of Ubiquitin carboxyl-terminal hydrolase 50 (USP50) from Macaca fascicularis (Crab-eating macaque).